Consider the following 351-residue polypeptide: Pinopsin (351 aa).

Over 1–30 the chain is Extracellular; it reads MSSNSSQAPPNGTPGPFDGPQWPYQAPQST. Asn4 carries an N-linked (GlcNAc...) asparagine glycan. Residues 31–55 traverse the membrane as a helical segment; it reads YVGVAVLMGTVVACASVVNGLVIVV. Topologically, residues 56–67 are cytoplasmic; it reads SICYKKLRSPLN. The chain crosses the membrane as a helical span at residues 68-92; the sequence is YILVNLAVADLLVTLCGSSVSLSNN. Residues 93–107 are Extracellular-facing; the sequence is INGFFVFGRRMCELE. Cys104 and Cys181 form a disulfide bridge. A helical membrane pass occupies residues 108 to 127; it reads GFMVSLTGIVGLWSLAILAL. Residues 128-146 are Cytoplasmic-facing; it reads ERYVVVCKPLGDFQFQRRH. A helical transmembrane segment spans residues 147-170; the sequence is AVSGCAFTWGWALLWSAPPLLGWS. The Extracellular portion of the chain corresponds to 171–194; it reads SYVPEGLRTSCGPNWYTGGSNNNS. N-linked (GlcNAc...) asparagine glycosylation occurs at Asn192. The helical transmembrane segment at 195–222 threads the bilayer; that stretch reads YILSLFVTCFVLPLSLILFSYTNLLLTL. Topologically, residues 223-244 are cytoplasmic; sequence RAAAAQQKEADTTQRAEREVTR. The chain crosses the membrane as a helical span at residues 245 to 268; it reads MVIVMVMAFLLCWLPYSTFALVVA. Residues 269–276 are Extracellular-facing; that stretch reads THKGIIIQ. A helical membrane pass occupies residues 277-301; it reads PVLASLPSYFSKTATVYNPIIYVFM. Lys288 is modified (N6-(retinylidene)lysine). The Cytoplasmic portion of the chain corresponds to 302–351; sequence NKQFQSCLLEMLCCGYQPQRTGKASPGTPGPHADVTAAGLRNKVMPAHPV. 2 S-palmitoyl cysteine lipidation sites follow: Cys314 and Cys315.

Belongs to the G-protein coupled receptor 1 family. Opsin subfamily. In terms of processing, phosphorylated on some or all of the serine and threonine residues present in the C-terminal region. Pineal gland.

Its subcellular location is the membrane. Produces a slow and prolonged phototransduction response consistent with the non-visual function of pineal photoreception. This chain is Pinopsin, found in Gallus gallus (Chicken).